The following is a 216-amino-acid chain: uncharacterized protein (216 aa).

It localises to the plastid. Its subcellular location is the chloroplast. This is an uncharacterized protein from Pyropia yezoensis (Susabi-nori).